The following is an 821-amino-acid chain: Phenylalanine--tRNA ligase beta subunit (821 aa).

The tRNA-binding domain maps to 39–149; the sequence is RTWAEGVVVG…DAVTVGEDVR (111 aa). The B5 domain maps to 409–503; sequence PLERTLTLRL…RLYGYDRFEE (95 aa). Residues D481, D487, E490, and E491 each coordinate Mg(2+). The 97-residue stretch at 724–820 folds into the FDX-ACB domain; sequence STYPASDRDL…LVEKYAVTLR (97 aa).

It belongs to the phenylalanyl-tRNA synthetase beta subunit family. Type 1 subfamily. Tetramer of two alpha and two beta subunits. Mg(2+) is required as a cofactor.

Its subcellular location is the cytoplasm. The catalysed reaction is tRNA(Phe) + L-phenylalanine + ATP = L-phenylalanyl-tRNA(Phe) + AMP + diphosphate + H(+). The chain is Phenylalanine--tRNA ligase beta subunit from Thermosynechococcus vestitus (strain NIES-2133 / IAM M-273 / BP-1).